Consider the following 352-residue polypeptide: N-acetyl-gamma-glutamyl-phosphate reductase (352 aa).

C155 is a catalytic residue.

Belongs to the NAGSA dehydrogenase family. Type 1 subfamily.

The protein localises to the cytoplasm. It catalyses the reaction N-acetyl-L-glutamate 5-semialdehyde + phosphate + NADP(+) = N-acetyl-L-glutamyl 5-phosphate + NADPH + H(+). It functions in the pathway amino-acid biosynthesis; L-arginine biosynthesis; N(2)-acetyl-L-ornithine from L-glutamate: step 3/4. Functionally, catalyzes the NADPH-dependent reduction of N-acetyl-5-glutamyl phosphate to yield N-acetyl-L-glutamate 5-semialdehyde. This chain is N-acetyl-gamma-glutamyl-phosphate reductase, found in Gloeothece citriformis (strain PCC 7424) (Cyanothece sp. (strain PCC 7424)).